A 447-amino-acid polypeptide reads, in one-letter code: Beta-glucuronosyltransferase GlcAT14A (447 aa).

Over 1 to 33 (MKKLRSYYSNVRHHQNHHHHHHHHSNIVSSERK) the chain is Cytoplasmic. A helical; Signal-anchor for type II membrane protein membrane pass occupies residues 34 to 54 (WIFFPLLIGSIFALFLLFLTT). Residues 55-447 (TLTSPTGGVR…TENFRSKQCK (393 aa)) are Lumenal-facing. N-linked (GlcNAc...) asparagine glycosylation is found at N151, N200, N329, and N405.

This sequence belongs to the glycosyltransferase 14 family.

The protein resides in the golgi apparatus membrane. Functionally, beta-glucuronosyltransferase involved in the biosynthesis of type II arabinogalactan (AG). Modifies both the beta-1,6-linked galactan and beta-1,3-linked galactan present in type II AG. Transfers glucuronate to beta-1,6-galactooligosaccharides with degrees of polymerization ranging from 3 to 11. Transfers glucuronate to beta-1,3-galactooligosaccharides with degrees of polymerization ranging from 5 to 7. The addition of glucuronate at the O6 position may terminate galactose chain extension. Required for cell elongation during seedling growth. This chain is Beta-glucuronosyltransferase GlcAT14A, found in Arabidopsis thaliana (Mouse-ear cress).